Reading from the N-terminus, the 142-residue chain is NTF2-related export protein 2 (142 aa).

The region spanning 17–136 is the NTF2 domain; it reads AAEEFVNIYY…WKIASDCFRF (120 aa).

In terms of assembly, associates with NXF1, NXF2, NXF3 and NXF5.

It is found in the nucleus. It localises to the cytoplasm. In terms of biological role, regulator of protein export for NES-containing proteins. Also plays a role in mRNA nuclear export. The protein is NTF2-related export protein 2 of Homo sapiens (Human).